The primary structure comprises 344 residues: Microcin C7 self-immunity protein MccF (344 aa).

Belongs to the peptidase S66 family.

Its function is as follows. Involved in specific self-immunity to microcin C7. The chain is Microcin C7 self-immunity protein MccF (mccF) from Escherichia coli.